The chain runs to 218 residues: Large ribosomal subunit protein uL3 (218 aa).

The disordered stretch occupies residues 121–163; sequence GYQKRHGFSRGPMTHGSKNHREPGSIGPGTTPGRIYPGKRMAG.

This sequence belongs to the universal ribosomal protein uL3 family. As to quaternary structure, part of the 50S ribosomal subunit. Forms a cluster with proteins L14 and L19.

In terms of biological role, one of the primary rRNA binding proteins, it binds directly near the 3'-end of the 23S rRNA, where it nucleates assembly of the 50S subunit. This chain is Large ribosomal subunit protein uL3, found in Parasynechococcus marenigrum (strain WH8102).